We begin with the raw amino-acid sequence, 665 residues long: Putative phospholipid:diacylglycerol acyltransferase 2 (665 aa).

A helical transmembrane segment spans residues 48-68 (LIGYLCTAWWLLLFLYHSVPV). The active-site Acyl-ester intermediate is S237. Catalysis depends on charge relay system residues D567 and H620.

This sequence belongs to the AB hydrolase superfamily. Lipase family.

It is found in the membrane. The enzyme catalyses a glycerophospholipid + a 1,2-diacyl-sn-glycerol = a monoacylglycerophospholipid + a triacyl-sn-glycerol. The polypeptide is Putative phospholipid:diacylglycerol acyltransferase 2 (PDAT2) (Arabidopsis thaliana (Mouse-ear cress)).